Reading from the N-terminus, the 508-residue chain is General transcription factor IIF subunit 1 (508 aa).

At Ala2 the chain carries N-acetylalanine. Thr156 carries the post-translational modification Phosphothreonine. Residues 177 to 446 (MQQRRLKDQD…TPSSGDVQVT (270 aa)) are disordered. Phosphoserine occurs at positions 217, 218, 221, and 224. The segment covering 232–251 (SKAKKKAPVTKAGRKKKKKK) has biased composition (basic residues). 2 stretches are compositionally biased toward acidic residues: residues 255–270 (DEAFEDSDDGDFEGQE) and 303–325 (EQSESSEESEEEKPPEEDKEEEE). At Thr331 the chain carries Phosphothreonine. Acidic residues predominate over residues 343–355 (DDSDSSEESDIDS). A compositionally biased stretch (basic residues) spans 364-374 (AKKKTPPKRER). 4 positions are modified to phosphoserine: Ser377, Ser380, Ser381, and Ser385. Polar residues predominate over residues 378–388 (GGSSKGTSRPG). Thr389 is modified (phosphothreonine). A compositionally biased stretch (low complexity) spans 389–406 (TPSAEAASTSSTLRAAAS). Ser391 is subject to Phosphoserine. N6-acetyllysine is present on Lys407. Over residues 428-443 (GPQSLSGKSTPSSGDV) the composition is skewed to polar residues. Phosphoserine is present on residues Ser431, Ser433, and Ser436. Thr437 bears the Phosphothreonine mark. At Ser440 the chain carries Phosphoserine.

It belongs to the TFIIF alpha subunit family. In terms of assembly, heterodimer of an alpha and a beta subunit. Interacts with GTF2F2, CTDP1, TAF6/TAFII80 and URI1. Interacts with GTF2B (via C-terminus and preferentially via acetylated form); this interaction prevents binding of GTF2B to GTF2F2. Part of TBP-based Pol II pre-initiation complex (PIC), in which Pol II core assembles with general transcription factors and other specific initiation factors including GTF2E1, GTF2E2, GTF2F1, GTF2F2, TCEA1, ERCC2, ERCC3, GTF2H2, GTF2H3, GTF2H4, GTF2H5, GTF2A1, GTF2A2, GTF2B and TBP; this large multi-subunit PIC complex mediates DNA unwinding and targets Pol II core to the transcription start site where the first phosphodiester bond forms. Phosphorylated on Ser and other residues by TAF1 and casein kinase II-like kinases.

The protein localises to the nucleus. In terms of biological role, TFIIF is a general transcription initiation factor that binds to RNA polymerase II and helps to recruit it to the initiation complex in collaboration with TFIIB. It promotes transcription elongation. The protein is General transcription factor IIF subunit 1 (Gtf2f1) of Mus musculus (Mouse).